The sequence spans 1502 residues: DNA-directed RNA polymerase subunit beta' (1502 aa).

Cysteine 60, cysteine 62, cysteine 75, and cysteine 78 together coordinate Zn(2+). The interval 265-293 (RKQRDLEDAEQLTGAERERKEYEASQERE) is disordered. Residues 279-293 (AERERKEYEASQERE) show a composition bias toward basic and acidic residues. Mg(2+) contacts are provided by aspartate 626, aspartate 628, and aspartate 630. Zn(2+) contacts are provided by cysteine 1002, cysteine 1075, cysteine 1082, and cysteine 1085. The disordered stretch occupies residues 1472-1502 (SDDNGDEVGKNGEFADETPFTGDSDDRDNEI).

This sequence belongs to the RNA polymerase beta' chain family. In terms of assembly, the RNAP catalytic core consists of 2 alpha, 1 beta, 1 beta' and 1 omega subunit. When a sigma factor is associated with the core the holoenzyme is formed, which can initiate transcription. Mg(2+) is required as a cofactor. Requires Zn(2+) as cofactor.

The enzyme catalyses RNA(n) + a ribonucleoside 5'-triphosphate = RNA(n+1) + diphosphate. Functionally, DNA-dependent RNA polymerase catalyzes the transcription of DNA into RNA using the four ribonucleoside triphosphates as substrates. The chain is DNA-directed RNA polymerase subunit beta' from Roseiflexus castenholzii (strain DSM 13941 / HLO8).